The chain runs to 199 residues: Probable NADH dehydrogenase [ubiquinone] iron-sulfur protein 7, mitochondrial (199 aa).

Residues 1–16 (MLSALRTAGALSTRRL) constitute a mitochondrion transit peptide. [4Fe-4S] cluster-binding residues include cysteine 74, cysteine 75, cysteine 139, and cysteine 169.

It belongs to the complex I 20 kDa subunit family. In terms of assembly, complex I is composed of 45 different subunits This is a component of the iron-sulfur (IP) fragment of the enzyme. The cofactor is [4Fe-4S] cluster.

Its subcellular location is the mitochondrion. The catalysed reaction is a ubiquinone + NADH + 5 H(+)(in) = a ubiquinol + NAD(+) + 4 H(+)(out). Functionally, core subunit of the mitochondrial membrane respiratory chain NADH dehydrogenase (Complex I) that is believed to belong to the minimal assembly required for catalysis. Complex I functions in the transfer of electrons from NADH to the respiratory chain. The immediate electron acceptor for the enzyme is believed to be ubiquinone. The polypeptide is Probable NADH dehydrogenase [ubiquinone] iron-sulfur protein 7, mitochondrial (Caenorhabditis briggsae).